The sequence spans 343 residues: Ribosomal RNA small subunit methyltransferase C (343 aa).

This sequence belongs to the methyltransferase superfamily. RsmC family. In terms of assembly, monomer.

It localises to the cytoplasm. It carries out the reaction guanosine(1207) in 16S rRNA + S-adenosyl-L-methionine = N(2)-methylguanosine(1207) in 16S rRNA + S-adenosyl-L-homocysteine + H(+). Specifically methylates the guanine in position 1207 of 16S rRNA in the 30S particle. This Shigella flexneri serotype 5b (strain 8401) protein is Ribosomal RNA small subunit methyltransferase C.